A 72-amino-acid polypeptide reads, in one-letter code: Neuropeptide IMFamide (72 aa).

The N-terminal stretch at 1 to 24 is a signal peptide; sequence MMRFTIGVVCLVAVLLSLAEVSEA. Position 36 is a phenylalanine amide (Phe36). Residues 40–72 constitute a propeptide that is removed on maturation; the sequence is GPTEYDQRGKTFTALCEIATEACQAWFPSTENK.

In terms of tissue distribution, expressed in corpora cardiaca (CC), corpora allata (CA), antennal lobe (AL) and gnathal ganglion (GNG) (at protein level). Expression detected in only a few animals (at protein level).

It localises to the secreted. This chain is Neuropeptide IMFamide, found in Agrotis ipsilon (Black cutworm moth).